The sequence spans 127 residues: Aspartate 1-decarboxylase (127 aa).

Ser-25 serves as the catalytic Schiff-base intermediate with substrate; via pyruvic acid. The residue at position 25 (Ser-25) is a Pyruvic acid (Ser). A substrate-binding site is contributed by Thr-57. Tyr-58 functions as the Proton donor in the catalytic mechanism. A substrate-binding site is contributed by 73–75; that stretch reads GAA.

The protein belongs to the PanD family. Heterooctamer of four alpha and four beta subunits. It depends on pyruvate as a cofactor. In terms of processing, is synthesized initially as an inactive proenzyme, which is activated by self-cleavage at a specific serine bond to produce a beta-subunit with a hydroxyl group at its C-terminus and an alpha-subunit with a pyruvoyl group at its N-terminus.

It is found in the cytoplasm. The catalysed reaction is L-aspartate + H(+) = beta-alanine + CO2. It functions in the pathway cofactor biosynthesis; (R)-pantothenate biosynthesis; beta-alanine from L-aspartate: step 1/1. Its function is as follows. Catalyzes the pyruvoyl-dependent decarboxylation of aspartate to produce beta-alanine. This is Aspartate 1-decarboxylase from Bacillus cereus (strain G9842).